A 374-amino-acid polypeptide reads, in one-letter code: Phosphate acyltransferase (374 aa).

This sequence belongs to the PlsX family. As to quaternary structure, homodimer. Probably interacts with PlsY.

It localises to the cytoplasm. It catalyses the reaction a fatty acyl-[ACP] + phosphate = an acyl phosphate + holo-[ACP]. It functions in the pathway lipid metabolism; phospholipid metabolism. Its function is as follows. Catalyzes the reversible formation of acyl-phosphate (acyl-PO(4)) from acyl-[acyl-carrier-protein] (acyl-ACP). This enzyme utilizes acyl-ACP as fatty acyl donor, but not acyl-CoA. The sequence is that of Phosphate acyltransferase from Gluconacetobacter diazotrophicus (strain ATCC 49037 / DSM 5601 / CCUG 37298 / CIP 103539 / LMG 7603 / PAl5).